Consider the following 576-residue polypeptide: Putative export ATP-binding/permease protein RC1073 (576 aa).

The ABC transmembrane type-1 domain maps to 20 to 303 (LIIVMISLLS…IFELLSEMHL (284 aa)). 6 consecutive transmembrane segments (helical) span residues 21–41 (IIVM…GSVF), 57–77 (VDNS…ASFF), 135–155 (FLSF…LMFF), 158–178 (FKLA…LIKF), 242–262 (ALFF…VVWI), and 277–297 (IISF…IFEL). One can recognise an ABC transporter domain in the interval 336 to 572 (IEFKNVDFTY…SEIYRNICRE (237 aa)). Residue 371 to 378 (GRSGAGKS) coordinates ATP.

The protein belongs to the ABC transporter superfamily. Homodimer.

The protein resides in the cell inner membrane. Part of an ABC transporter complex. Transmembrane domains (TMD) form a pore in the inner membrane and the ATP-binding domain (NBD) is responsible for energy generation. This Rickettsia conorii (strain ATCC VR-613 / Malish 7) protein is Putative export ATP-binding/permease protein RC1073.